We begin with the raw amino-acid sequence, 240 residues long: Proteasome subunit alpha (240 aa).

Belongs to the peptidase T1A family. The 20S proteasome core is composed of 14 alpha and 14 beta subunits that assemble into four stacked heptameric rings, resulting in a barrel-shaped structure. The two inner rings, each composed of seven catalytic beta subunits, are sandwiched by two outer rings, each composed of seven alpha subunits. The catalytic chamber with the active sites is on the inside of the barrel. Has a gated structure, the ends of the cylinder being occluded by the N-termini of the alpha-subunits. Is capped at one or both ends by the proteasome regulatory ATPase, PAN.

Its subcellular location is the cytoplasm. The formation of the proteasomal ATPase PAN-20S proteasome complex, via the docking of the C-termini of PAN into the intersubunit pockets in the alpha-rings, triggers opening of the gate for substrate entry. Interconversion between the open-gate and close-gate conformations leads to a dynamic regulation of the 20S proteasome proteolysis activity. In terms of biological role, component of the proteasome core, a large protease complex with broad specificity involved in protein degradation. This is Proteasome subunit alpha from Metallosphaera sedula (strain ATCC 51363 / DSM 5348 / JCM 9185 / NBRC 15509 / TH2).